The chain runs to 379 residues: Probable G-protein coupled receptor 27 (379 aa).

Topologically, residues 1–26 (MANASEPGGGGSGGGAEAAALGLRLA) are extracellular. The N-linked (GlcNAc...) asparagine glycan is linked to asparagine 3. The helical transmembrane segment at 27–47 (TLSLLLCVSLAGNVLFALLIV) threads the bilayer. Topologically, residues 48–58 (RERSLHRAPYY) are cytoplasmic. The chain crosses the membrane as a helical span at residues 59 to 79 (LLLDLCLADGLRALACLPAVM). The Extracellular portion of the chain corresponds to 80–100 (LAARRAAAAAGTPPGALGCKL). Cysteine 98 and cysteine 175 form a disulfide bridge. Residues 101-121 (LAFLAALFCFHAAFLLLGVGV) form a helical membrane-spanning segment. Over 122-142 (TRYLAIAHHRFYAERLAGWPC) the chain is Cytoplasmic. Residues 143–163 (AAMLVCAAWALALAAAFPPVL) form a helical membrane-spanning segment. Over 164–185 (DGGGADDEDAPCALEQRPDGAP) the chain is Extracellular. The chain crosses the membrane as a helical span at residues 186–206 (GALGFLLLLAAVVGATHLVYL). At 207 to 289 (RLLFFIHDRR…FKTEKRLCKM (83 aa)) the chain is on the cytoplasmic side. The helical transmembrane segment at 290 to 310 (FYAITLLFLLLWGPYVVASYL) threads the bilayer. Residues 311–324 (RVLVRPGAVPQAYL) are Extracellular-facing. A helical membrane pass occupies residues 325 to 345 (TASVWLTFAQAGINPVVCFLF). Topologically, residues 346–379 (NRELRDCFRAQFPCCQSPQATQATLPCDLKGIGL) are cytoplasmic.

It belongs to the G-protein coupled receptor 1 family.

It localises to the cell membrane. Functionally, orphan receptor. Possible candidate for amine-like G-protein coupled receptor. This Mus musculus (Mouse) protein is Probable G-protein coupled receptor 27 (Gpr27).